A 388-amino-acid polypeptide reads, in one-letter code: MPYLQPPRPHPHPHPTSRLSRASPPSPFPFFPAGTSRSGRLQPVPVSGHSASRVSKGKFAVAAVTLDDYLPMRSTEVKNRTSTDGIKSLRLITAVKTPYLPDGRFDLEAYDSLINTQINGGAEGVIVGGTTGEGHLMSWDEHIMLIGHTVNCFGANIKVIGNTGSNSTREAVHATEQGFAVGMHAALHVNPYYGKTSTEGLISHFKEVLPMGPTIIYNVPSRTSQDIPPPVIEALSSYSNMAGVKECVGHERVKCYTDKGISIWSGNDDECHDSRWKYGATGVISVASNLVPGLMHSLMFEGENAALNEKLLPLMKWLFCEPNPIGLNTALAQLGVVRPVFRLPYTPLPLEKRVEFVRIVEAIGRENFVGQKESRVLDDDDFVLISRY.

A disordered region spans residues Met1–Ala51. The transit peptide at Met1 to Ala62 directs the protein to the chloroplast. Position 131 (Thr131) interacts with pyruvate. Tyr217 (proton donor/acceptor) is an active-site residue. Lys245 (schiff-base intermediate with substrate) is an active-site residue. Position 284 (Ile284) interacts with pyruvate.

Belongs to the DapA family. In terms of assembly, tetramer of modified subunits derived from two genes in different combinations.

The protein localises to the plastid. The protein resides in the chloroplast. It carries out the reaction L-aspartate 4-semialdehyde + pyruvate = (2S,4S)-4-hydroxy-2,3,4,5-tetrahydrodipicolinate + H2O + H(+). It participates in amino-acid biosynthesis; L-lysine biosynthesis via DAP pathway; (S)-tetrahydrodipicolinate from L-aspartate: step 3/4. Its activity is regulated as follows. Sensitive to lysine inhibition. This inhibition increase in an allosteric manner with increasing concentration of the inhibitor. Functionally, catalyzes the condensation of (S)-aspartate-beta-semialdehyde [(S)-ASA] and pyruvate to 4-hydroxy-tetrahydrodipicolinate (HTPA). In Triticum aestivum (Wheat), this protein is 4-hydroxy-tetrahydrodipicolinate synthase 1, chloroplastic.